A 695-amino-acid polypeptide reads, in one-letter code: DNA ligase (695 aa).

NAD(+) is bound by residues 39 to 43 (DAEYD), 88 to 89 (SL), and Glu124. The N6-AMP-lysine intermediate role is filled by Lys126. 4 residues coordinate NAD(+): Arg147, Glu183, Lys299, and Lys323. Zn(2+)-binding residues include Cys419, Cys422, Cys437, and Cys443. Positions 612 to 695 (PAQGHLSGKT…ELAGIGPVGP (84 aa)) constitute a BRCT domain.

This sequence belongs to the NAD-dependent DNA ligase family. LigA subfamily. It depends on Mg(2+) as a cofactor. Mn(2+) is required as a cofactor.

It catalyses the reaction NAD(+) + (deoxyribonucleotide)n-3'-hydroxyl + 5'-phospho-(deoxyribonucleotide)m = (deoxyribonucleotide)n+m + AMP + beta-nicotinamide D-nucleotide.. In terms of biological role, DNA ligase that catalyzes the formation of phosphodiester linkages between 5'-phosphoryl and 3'-hydroxyl groups in double-stranded DNA using NAD as a coenzyme and as the energy source for the reaction. It is essential for DNA replication and repair of damaged DNA. This is DNA ligase from Gluconacetobacter diazotrophicus (strain ATCC 49037 / DSM 5601 / CCUG 37298 / CIP 103539 / LMG 7603 / PAl5).